An 880-amino-acid polypeptide reads, in one-letter code: Protein transport protein SEC23 A (880 aa).

A compositionally biased stretch (polar residues) spans 1–13 (MANLPKSSVNYPG). The tract at residues 1–95 (MANLPKSSVN…PPGPPVFNTP (95 aa)) is disordered. Pro residues predominate over residues 20-36 (PNRPSPQPDRTPVPHSP). Over residues 57-70 (MSSPSMKSPSLLSP) the composition is skewed to low complexity. The Zn(2+) site is built by Cys-204, Cys-207, Cys-226, and Cys-229. The tract at residues 204 to 229 (CLNCGAYSNPYSSILIGSGQWQCVIC) is zinc finger-like.

It belongs to the SEC23/SEC24 family. SEC24 subfamily. As to quaternary structure, component of the coat protein complex II (COPII), composed of at least five proteins: the Sec23/24 complex, the Sec13/31 complex and Sar1. Mostly expressed in seedlings, roots, cotyledons, leaves, trichomes, leaf primordia and flowers, and, to a lower extent, in mature siliques.

The protein localises to the cytoplasmic vesicle. Its subcellular location is the COPII-coated vesicle membrane. The protein resides in the endoplasmic reticulum membrane. It localises to the membrane. In terms of biological role, component of the coat protein complex II (COPII) which promotes the formation of transport vesicles from the endoplasmic reticulum (ER). The coat has two main functions, the physical deformation of the endoplasmic reticulum membrane into vesicles and the selection of cargo molecules. May contribute to COPII-coated vesicles formation and ER-Golgi vesicle transport. Together with SEC23D, essential for pollen wall development and exine patterning, probably by regulating endoplasmic reticulum (ER) export of lipids and proteins (e.g. sporopollenin) necessary for pollen wall formation. Also involved in plastid physiology in anther tapetal cells. This is Protein transport protein SEC23 A from Arabidopsis thaliana (Mouse-ear cress).